The sequence spans 578 residues: E3 ubiquitin-protein ligase Praja-1 (578 aa).

Positions 1 to 298 are disordered; sequence MSHQERIASQ…KVPRRRRTMA (298 aa). 2 stretches are compositionally biased toward basic and acidic residues: residues 57–67 and 107–116; these read DYSRYPPREYR and KFKDDPEKGA. The segment covering 151–163 has biased composition (polar residues); it reads SKQNGSSASQISS. Residue Thr-231 is modified to Phosphothreonine. Basic and acidic residues-rich tracts occupy residues 243–264 and 273–290; these read RWRD…RGRG and RYAE…ADKV. Phosphoserine is present on residues Ser-317 and Ser-319. Residues 332 to 397 form a disordered region; it reads RSREQPQSSS…QASLEEGEIP (66 aa). The segment covering 359-373 has biased composition (low complexity); that stretch reads AGAGSLASAGSNGSG. Over residues 377–395 the composition is skewed to acidic residues; the sequence is EVQDPSLQEEEQASLEEGE. An RING-type zinc finger spans residues 530–571; that stretch reads CPICCSEYVKGEVATELPCHHYFHKPCVSIWLQKSGTCPVCR.

As to quaternary structure, binds ubiquitin-conjugating enzymes (E2s). Binds, in vitro and in vivo, the MAGE conserved domain of MAGED1. Binds weakly Necdin, in vitro. Interacts with UBE2D2. Substrate for E2-dependent ubiquitination. As to expression, expressed in brain, liver, kidney. Highest levels in brain where it is found in many regions including cortical and subcortical areas and in neurons of the amygdala. Weak expression also found in testis. Also expressed in developing embryo.

The enzyme catalyses S-ubiquitinyl-[E2 ubiquitin-conjugating enzyme]-L-cysteine + [acceptor protein]-L-lysine = [E2 ubiquitin-conjugating enzyme]-L-cysteine + N(6)-ubiquitinyl-[acceptor protein]-L-lysine.. In terms of biological role, has E2-dependent E3 ubiquitin-protein ligase activity. Ubiquitinates MAGED1 antigen leading to its subsequent degradation by proteasome. May be involved in protein sorting. The sequence is that of E3 ubiquitin-protein ligase Praja-1 (Pja1) from Mus musculus (Mouse).